The chain runs to 1220 residues: DNA-directed RNA polymerase subunit beta' (1220 aa).

Cysteine 60, cysteine 62, cysteine 75, and cysteine 78 together coordinate Zn(2+). Mg(2+) contacts are provided by aspartate 449, aspartate 451, and aspartate 453. Zn(2+) contacts are provided by cysteine 818, cysteine 892, cysteine 899, and cysteine 902.

This sequence belongs to the RNA polymerase beta' chain family. As to quaternary structure, the RNAP catalytic core consists of 2 alpha, 1 beta, 1 beta' and 1 omega subunit. When a sigma factor is associated with the core the holoenzyme is formed, which can initiate transcription. Requires Mg(2+) as cofactor. It depends on Zn(2+) as a cofactor.

The catalysed reaction is RNA(n) + a ribonucleoside 5'-triphosphate = RNA(n+1) + diphosphate. Functionally, DNA-dependent RNA polymerase catalyzes the transcription of DNA into RNA using the four ribonucleoside triphosphates as substrates. This Lacticaseibacillus casei (strain BL23) (Lactobacillus casei) protein is DNA-directed RNA polymerase subunit beta'.